Consider the following 466-residue polypeptide: Transcription factor SOX-10 (466 aa).

A disordered region spans residues 1 to 67 (MAEEQDLSEV…QQDGEADDDK (67 aa)). A compositionally biased stretch (low complexity) spans 23-32 (LSPGSAPSLG). Residue S24 is modified to Phosphoserine. The interval 62 to 102 (EADDDKFPVCIREAVSQVLSGYDWTLVPMPVRVNGASKSKP) is dimerization (DIM). Positions 104–172 (VKRPMNAFMV…QHKKDHPDYK (69 aa)) form a DNA-binding region, HMG box. The short motif at 134–145 (LSKTLGKLWRLL) is the Nuclear export signal element. Basic and acidic residues-rich tracts occupy residues 160 to 173 (LRMQ…DYKY) and 254 to 271 (ADPK…KPHI). Disordered stretches follow at residues 160 to 199 (LRMQ…EQGG), 212 to 274 (LDHR…IDFG), 354 to 375 (AQVK…QPST), and 433 to 466 (RPLY…LSRP). The segment at 228 to 310 (PEHPSGQSHG…LPPNGHPGHV (83 aa)) is transactivation domain (TAM). Residues 353-466 (KAQVKTETAG…QPVYTTLSRP (114 aa)) form a transactivation domain (TAC) region. Positions 440 to 466 (SDPSPSGPQSHSPTHWEQPVYTTLSRP) are enriched in polar residues.

As to quaternary structure, monomer. Interacts with ARMCX3 at the mitochondrial outer membrane surface. Interacts with PAX3. Expressed in fetal brain and in adult brain, heart, small intestine and colon.

Its subcellular location is the cytoplasm. The protein localises to the nucleus. It is found in the mitochondrion outer membrane. Functionally, transcription factor that plays a central role in developing and mature glia. Specifically activates expression of myelin genes, during oligodendrocyte (OL) maturation, such as DUSP15 and MYRF, thereby playing a central role in oligodendrocyte maturation and CNS myelination. Once induced, MYRF cooperates with SOX10 to implement the myelination program. Transcriptional activator of MITF, acting synergistically with PAX3. Transcriptional activator of MBP, via binding to the gene promoter. The chain is Transcription factor SOX-10 (SOX10) from Homo sapiens (Human).